The following is a 247-amino-acid chain: Exosome complex component Rrp4 (247 aa).

Residues 70 to 143 (GDTVIGLIED…INPILSIKGK (74 aa)) form the S1 motif domain. Residues 149–211 (SSGIVIDIPP…EALVEAIQII (63 aa)) form the KH domain.

Belongs to the RRP4 family. In terms of assembly, component of the archaeal exosome complex. Forms a trimer of Rrp4 and/or Csl4 subunits. The trimer associates with a hexameric ring-like arrangement composed of 3 Rrp41-Rrp42 heterodimers.

It localises to the cytoplasm. Non-catalytic component of the exosome, which is a complex involved in RNA degradation. Increases the RNA binding and the efficiency of RNA degradation. Confers strong poly(A) specificity to the exosome. The chain is Exosome complex component Rrp4 from Sulfurisphaera tokodaii (strain DSM 16993 / JCM 10545 / NBRC 100140 / 7) (Sulfolobus tokodaii).